A 558-amino-acid chain; its full sequence is Aurovertin biosynthesis cluster transcription factor aurF (558 aa).

This sequence belongs to the POU transcription factor family. Class-3 subfamily.

The protein localises to the nucleus. Functionally, transcription factor that regulates the expression of the gene cluster that mediates the biosynthesis of aurovertins, fungal polyketides that exhibit potent inhibition of adenosine triphosphate synthase. The polypeptide is Aurovertin biosynthesis cluster transcription factor aurF (Calcarisporium arbuscula (Dendryphion arbuscula)).